The sequence spans 279 residues: 4-hydroxy-3-methylbut-2-enyl diphosphate reductase (279 aa).

Cys12 is a [4Fe-4S] cluster binding site. His41 and His74 together coordinate (2E)-4-hydroxy-3-methylbut-2-enyl diphosphate. Dimethylallyl diphosphate is bound by residues His41 and His74. Isopentenyl diphosphate contacts are provided by His41 and His74. Cys96 is a binding site for [4Fe-4S] cluster. His124 serves as a coordination point for (2E)-4-hydroxy-3-methylbut-2-enyl diphosphate. His124 serves as a coordination point for dimethylallyl diphosphate. His124 contacts isopentenyl diphosphate. The active-site Proton donor is the Glu126. (2E)-4-hydroxy-3-methylbut-2-enyl diphosphate is bound at residue Thr164. Residue Cys192 coordinates [4Fe-4S] cluster. Residues Ser220, Ser221, Asn222, and Ser263 each coordinate (2E)-4-hydroxy-3-methylbut-2-enyl diphosphate. 4 residues coordinate dimethylallyl diphosphate: Ser220, Ser221, Asn222, and Ser263. Isopentenyl diphosphate-binding residues include Ser220, Ser221, Asn222, and Ser263.

This sequence belongs to the IspH family. Requires [4Fe-4S] cluster as cofactor.

The catalysed reaction is isopentenyl diphosphate + 2 oxidized [2Fe-2S]-[ferredoxin] + H2O = (2E)-4-hydroxy-3-methylbut-2-enyl diphosphate + 2 reduced [2Fe-2S]-[ferredoxin] + 2 H(+). It carries out the reaction dimethylallyl diphosphate + 2 oxidized [2Fe-2S]-[ferredoxin] + H2O = (2E)-4-hydroxy-3-methylbut-2-enyl diphosphate + 2 reduced [2Fe-2S]-[ferredoxin] + 2 H(+). It participates in isoprenoid biosynthesis; dimethylallyl diphosphate biosynthesis; dimethylallyl diphosphate from (2E)-4-hydroxy-3-methylbutenyl diphosphate: step 1/1. Its pathway is isoprenoid biosynthesis; isopentenyl diphosphate biosynthesis via DXP pathway; isopentenyl diphosphate from 1-deoxy-D-xylulose 5-phosphate: step 6/6. Functionally, catalyzes the conversion of 1-hydroxy-2-methyl-2-(E)-butenyl 4-diphosphate (HMBPP) into a mixture of isopentenyl diphosphate (IPP) and dimethylallyl diphosphate (DMAPP). Acts in the terminal step of the DOXP/MEP pathway for isoprenoid precursor biosynthesis. The polypeptide is 4-hydroxy-3-methylbut-2-enyl diphosphate reductase (Clostridioides difficile (strain 630) (Peptoclostridium difficile)).